The primary structure comprises 357 residues: Aminomethyltransferase (357 aa).

Belongs to the GcvT family. The glycine cleavage system is composed of four proteins: P, T, L and H.

It carries out the reaction N(6)-[(R)-S(8)-aminomethyldihydrolipoyl]-L-lysyl-[protein] + (6S)-5,6,7,8-tetrahydrofolate = N(6)-[(R)-dihydrolipoyl]-L-lysyl-[protein] + (6R)-5,10-methylene-5,6,7,8-tetrahydrofolate + NH4(+). The glycine cleavage system catalyzes the degradation of glycine. This Halothermothrix orenii (strain H 168 / OCM 544 / DSM 9562) protein is Aminomethyltransferase.